We begin with the raw amino-acid sequence, 98 residues long: Integration host factor subunit alpha (98 aa).

The disordered stretch occupies residues 52-71 (FDLRDKNQRPGRNPKTGEDI).

Belongs to the bacterial histone-like protein family. As to quaternary structure, heterodimer of an alpha and a beta chain.

Its function is as follows. This protein is one of the two subunits of integration host factor, a specific DNA-binding protein that functions in genetic recombination as well as in transcriptional and translational control. The protein is Integration host factor subunit alpha of Photorhabdus laumondii subsp. laumondii (strain DSM 15139 / CIP 105565 / TT01) (Photorhabdus luminescens subsp. laumondii).